The following is a 436-amino-acid chain: Alpha-2 adrenergic receptor (436 aa).

Over 1–27 (MDVTQSNATKDDANITVTPWPYTETAA) the chain is Extracellular. N-linked (GlcNAc...) asparagine glycosylation is found at N7 and N14. The helical transmembrane segment at 28-52 (AFIILVVSVIILVSIVGNVLVIVAV) threads the bilayer. The Cytoplasmic portion of the chain corresponds to 53–64 (LTSRALRAPQNL). The chain crosses the membrane as a helical span at residues 65–90 (FLVSLACADILVATLVIPFSLANEIM). Over 91-100 (GYWFFGSTWC) the chain is Extracellular. A disulfide bridge links C100 with C173. The helical transmembrane segment at 101–123 (AFYLALDVLFCTSSIVHLCAISL) threads the bilayer. Residues 124–144 (DRYWSVTKAVSYNLKRTPKRI) are Cytoplasmic-facing. The helical transmembrane segment at 145–167 (KSMIAVVWVISAVISFPPLIMTK) threads the bilayer. The Extracellular segment spans residues 168-178 (HDEKECLINDE). The chain crosses the membrane as a helical span at residues 179 to 202 (TWYILSSSLVSFFAPGFIMITVYC). Over 203–329 (KIYRVAKQRS…QMREKRFTFV (127 aa)) the chain is Cytoplasmic. Positions 238-280 (KFEKESPSSNSSESNQRQEELDDIDLEESATSDNKPKSSRFSN) are disordered. Over residues 257-267 (ELDDIDLEESA) the composition is skewed to acidic residues. A helical membrane pass occupies residues 330 to 353 (LTVVMGVFVLCWFPFFFTYSLHAI). Residues 354-366 (CGDSCEPPEALFK) lie on the Extracellular side of the membrane. The chain crosses the membrane as a helical span at residues 367–387 (LFFWIGYCNSSVNPIIYTIFN). Over 388–436 (RDFRKAFKKICLLDCAAHLRDSCLGTLGRLNAKCIFECHQKSNQEETAN) the chain is Cytoplasmic.

This sequence belongs to the G-protein coupled receptor 1 family.

Its subcellular location is the cell membrane. Its function is as follows. Alpha-2 adrenergic receptors mediate the catecholamine-induced inhibition of adenylate cyclase through the action of G proteins. The chain is Alpha-2 adrenergic receptor from Carassius auratus (Goldfish).